The sequence spans 206 residues: MKHNNVIPNGHFKKHWQNYVKTWFNQPARKTRRRIARQKKAVKIFPRPTSGPLRPVVHGQTLKYNMKVRTGKGFTLEELKAAGIPKKLAPTIGIAVDHRRKNRSLEGLQTNVQRLKTYKTKLVIFPRRARKVKAGDSTPEELANATQVQGDYLPIVREKPTMELVKLTSEMKSFKAFDKIRLERTNKRHAGARAKRAAEAEKEEKK.

A disordered region spans residues Thr185–Lys206. Over residues Asn186 to Lys195 the composition is skewed to basic residues. Residues Arg196 to Lys206 show a composition bias toward basic and acidic residues.

It belongs to the eukaryotic ribosomal protein eL13 family.

It is found in the cytoplasm. The protein is Large ribosomal subunit protein eL13z (RPL13B) of Arabidopsis thaliana (Mouse-ear cress).